The primary structure comprises 1009 residues: Type VII secretion system accessory factor EsaA (1009 aa).

Helical transmembrane passes span 7 to 27 (IYAL…IFFV), 822 to 842 (ISPT…AYIF), 869 to 889 (VITS…VGLI), 903 to 923 (KFIL…TYLL), 928 to 948 (SIGM…MNNL), and 979 to 999 (IGLA…LNMF).

It belongs to the EsaA family. As to quaternary structure, homodimer. Interacts with EssB.

Its subcellular location is the cell membrane. Component of the type VII secretion system (Ess). Provides together with EssB and other components such as EssC and EssE a secretion platform across the cytoplasmic membrane in the host. The polypeptide is Type VII secretion system accessory factor EsaA (Staphylococcus aureus (strain Mu50 / ATCC 700699)).